Reading from the N-terminus, the 149-residue chain is Large ribosomal subunit protein bL9 (149 aa).

Belongs to the bacterial ribosomal protein bL9 family.

Binds to the 23S rRNA. This chain is Large ribosomal subunit protein bL9, found in Christiangramia forsetii (strain DSM 17595 / CGMCC 1.15422 / KT0803) (Gramella forsetii).